A 635-amino-acid polypeptide reads, in one-letter code: Protein OPG056 (635 aa).

Belongs to the orthopoxvirus OPG056 family. Interacts with protein OPG164. Interacts with protein OPG064.

It localises to the virion membrane. The protein localises to the host endosome. Its function is as follows. Plays a role in intracellular enveloped virus (IEV) transport to the cell surface through microtubule transport. Together with protein OPG064, forms a complex that interacts with host KLC2 (kinesin light chain isoform 2) to engage the kinesin-1 complex and thereby promote IEV trafficking. The polypeptide is Protein OPG056 (OPG056) (Variola virus (isolate Human/India/Ind3/1967) (VARV)).